A 738-amino-acid polypeptide reads, in one-letter code: Elongation factor G, mitochondrial (738 aa).

Residues 1–20 (MCIGPAPTPETEEELPPSPQ) are disordered. The 289-residue stretch at 32–320 (RFQRNIGVSA…GVCAYLPNPA (289 aa)) folds into the tr-type G domain. Residues 41 to 48 (AHIDSGKT), 118 to 122 (DTPGH), and 172 to 175 (NKMD) each bind GTP.

Belongs to the TRAFAC class translation factor GTPase superfamily. Classic translation factor GTPase family. EF-G/EF-2 subfamily.

The protein resides in the mitochondrion. It functions in the pathway protein biosynthesis; polypeptide chain elongation. Mitochondrial GTPase that catalyzes the GTP-dependent ribosomal translocation step during translation elongation. During this step, the ribosome changes from the pre-translocational (PRE) to the post-translocational (POST) state as the newly formed A-site-bound peptidyl-tRNA and P-site-bound deacylated tRNA move to the P and E sites, respectively. Catalyzes the coordinated movement of the two tRNA molecules, the mRNA and conformational changes in the ribosome. The protein is Elongation factor G, mitochondrial of Laccaria bicolor (strain S238N-H82 / ATCC MYA-4686) (Bicoloured deceiver).